Reading from the N-terminus, the 65-residue chain is Large ribosomal subunit protein bL35 (65 aa).

Residues 1–16 (MPKMKTKSSAKKRFKV) are compositionally biased toward basic residues. The segment at 1–26 (MPKMKTKSSAKKRFKVRSSGGIKRSQ) is disordered.

This sequence belongs to the bacterial ribosomal protein bL35 family.

The protein is Large ribosomal subunit protein bL35 of Azoarcus sp. (strain BH72).